The sequence spans 145 residues: Basic leucine zipper 1 (145 aa).

Residues 1-11 (MANAEKTSSGS) show a composition bias toward polar residues. The segment at 1-39 (MANAEKTSSGSDIDEKKRKRKLSNRESARRSRLKKQKLM) is disordered. Positions 14-77 (DEKKRKRKLS…DSVETENAGL (64 aa)) constitute a bZIP domain. Residues 16-37 (KKRKRKLSNRESARRSRLKKQK) form a basic motif region. The interval 46-53 (ISSLERRI) is leucine-zipper.

The protein belongs to the bZIP family. Interacts with ZFP7, BZIP4, BZIP9, BZIP10, BZIP11, BZIP25, BZIP42, BZIP44, BZIP53, BZIP58 and BZIP63. Expressed in both shoots, including young leaves, stipulae and trichomes (except in cotyledons and hypocotyl), and roots, including vascular tissues (e.g. in both the phloem and the xylem). Present in seeds and pollen. Restricted to vasculatures and roots in the presence of sucrose or glucose.

The protein resides in the nucleus. Its function is as follows. Transcription factor that binds to the C-box-like motif (5'-TGCTGACGTCA-3') and G-box-like motif (5'-CCACGTGGCC-3'), ABRE elements, of gene promoters involved in sugar signaling. Activated by low energy stress both at transcriptional and post-transcriptional mechanisms. Promotes dark-induced senescence and participates in the transcriptional reprogramming of amino acid metabolism during the dark-induced starvation response. Transcription activator of the mannan synthase CSLA9. Recognizes and binds to DNA-specific sequence of CSLA9 promoter. The polypeptide is Basic leucine zipper 1 (BZIP1) (Arabidopsis thaliana (Mouse-ear cress)).